The sequence spans 563 residues: Membrane protein insertase YidC (563 aa).

A helical transmembrane segment spans residues 6 to 26 (TVLWMIFSFSLLLLWNNWQIH). A disordered region spans residues 36 to 70 (PAPEAAATQQPKADANGTAASSTASIPSSPAAAPA). Low complexity predominate over residues 54–70 (AASSTASIPSSPAAAPA). 4 helical membrane passes run 373–393 (WGWT…PLAA), 443–463 (LPMV…LASV), 482–502 (PFFI…KLNP), and 512–532 (VMMI…AGLV).

Belongs to the OXA1/ALB3/YidC family. Type 1 subfamily. In terms of assembly, interacts with the Sec translocase complex via SecD. Specifically interacts with transmembrane segments of nascent integral membrane proteins during membrane integration.

Its subcellular location is the cell inner membrane. Its function is as follows. Required for the insertion and/or proper folding and/or complex formation of integral membrane proteins into the membrane. Involved in integration of membrane proteins that insert both dependently and independently of the Sec translocase complex, as well as at least some lipoproteins. Aids folding of multispanning membrane proteins. This is Membrane protein insertase YidC from Bordetella parapertussis (strain 12822 / ATCC BAA-587 / NCTC 13253).